The following is a 538-amino-acid chain: Cytochrome P450 monooxygenase claO (538 aa).

2 helical membrane passes run 7–27 and 222–242; these read IGAF…KLVG and INPS…PILL. Residue Cys475 coordinates heme.

It belongs to the cytochrome P450 family. Requires heme as cofactor.

The protein resides in the membrane. Its pathway is secondary metabolite biosynthesis; terpenoid biosynthesis. In terms of biological role, cytochrome P450 monooxygenase; part of the gene cluster that mediates the biosynthesis of clavilactone A, a meroterpenoid that features a unique benzo-fused ten-membered carbocyclic ring unit with an alpha,beta-epoxy-gamma-lactone moiety, forming an intriguing 10/5/3 tricyclic nested skeleton. Cytochrome P450 monooxygenases claO, claP, claQ, claU, and claW are close orthologs, suggesting that a redundant function or pseudogenes are present in the cla cluster. These monoxygenases are not involved in clavilactone A biosynthesis nor in its modification. ClaR, ClaS and ClaT are sufficient to produce clavilactone A. The biosynthesis begins with the prenyltransferase claS that transfers geranyl pyrophosphate (GPP) to hydroquinone to produces geranylhydroquinone. The cytochrome P450 monooxygenase claR then catalyzes the diradical coupling reaction between the intramolecular hydroquinone and allyl moieties to form the benzo-fused ten-membered carbocyclic ring unit of wigantol. Finally the cytochrome P450 monooxygenase claT exquisitely and stereoselectively assembles the alpha,beta-epoxy-gamma-lactone moiety, producing clavilactone A via arnebinol A. This chain is Cytochrome P450 monooxygenase claO, found in Ampulloclitocybe clavipes (Club foot).